A 201-amino-acid polypeptide reads, in one-letter code: Glycerol-3-phosphate acyltransferase (201 aa).

Transmembrane regions (helical) follow at residues 3-23, 53-73, 80-100, 115-135, and 153-175; these read LFAIFYLFLAYLLGSVSSAIL, WVALSVLLFDMLKGMLPVWLG, HFELGMVALGACLGHIFPIFF, IAPISWGVAGSMLGTWLLIFF, and FYVWWFKPEFTFPVALVCCLLIY.

This sequence belongs to the PlsY family. Probably interacts with PlsX.

It localises to the cell inner membrane. It catalyses the reaction an acyl phosphate + sn-glycerol 3-phosphate = a 1-acyl-sn-glycero-3-phosphate + phosphate. It participates in lipid metabolism; phospholipid metabolism. In terms of biological role, catalyzes the transfer of an acyl group from acyl-phosphate (acyl-PO(4)) to glycerol-3-phosphate (G3P) to form lysophosphatidic acid (LPA). This enzyme utilizes acyl-phosphate as fatty acyl donor, but not acyl-CoA or acyl-ACP. This Pasteurella multocida (strain Pm70) protein is Glycerol-3-phosphate acyltransferase.